Reading from the N-terminus, the 107-residue chain is U1-lycotoxin-Ls1a (107 aa).

A signal peptide spans 1–20; the sequence is MMKVLVVVALLVTLISYSSS. A propeptide spanning residues 21-41 is cleaved from the precursor; the sequence is EGIDDLEADELLSLMANEQTR. 4 cysteine pairs are disulfide-bonded: Cys-44–Cys-59, Cys-51–Cys-68, Cys-58–Cys-86, and Cys-70–Cys-84.

It belongs to the neurotoxin 19 (CSTX) family. 04 (U1-Lctx) subfamily. In terms of tissue distribution, expressed by the venom gland.

The protein resides in the secreted. The sequence is that of U1-lycotoxin-Ls1a from Lycosa singoriensis (Wolf spider).